The primary structure comprises 244 residues: MAKAHSSLVFCLLALALVRFAQAKCTNGYTFLGIKELSEKDKQKLLDFHNKFRELTAAGEAPAPKGEDGRERRQPPAANMLELTWHKKAEKQAYKWARTCEWKHNNATDKAGNSMGQNLGRKMSTEKTDVDDTFDKWSYDLVRGWFDEAKLYKYGSGFSMSTGHYTQVVWANTSQVGCGYSYYMQIDEYNQKWYTGYLVCNYSPAGNFNNREPYEISKEKCTDPKLESSKNYKHLCVLKKKKKN.

Residues 1 to 23 (MAKAHSSLVFCLLALALVRFAQA) form the signal peptide. Residues 46–202 (LDFHNKFREL…WYTGYLVCNY (157 aa)) enclose the SCP domain. 2 N-linked (GlcNAc...) asparagine glycosylation sites follow: asparagine 106 and asparagine 172.

This sequence belongs to the CRISP family. Venom allergen 5-like subfamily. In terms of tissue distribution, salivary gland (at protein level).

Its subcellular location is the secreted. In terms of biological role, inhibits host platelet aggregation induced by low doses of collagen. The protein is Salivary antigen-5 of Triatoma infestans (Assassin bug).